The chain runs to 480 residues: Proline--tRNA ligase (480 aa).

The protein belongs to the class-II aminoacyl-tRNA synthetase family. ProS type 3 subfamily. Homodimer.

The protein resides in the cytoplasm. The enzyme catalyses tRNA(Pro) + L-proline + ATP = L-prolyl-tRNA(Pro) + AMP + diphosphate. Functionally, catalyzes the attachment of proline to tRNA(Pro) in a two-step reaction: proline is first activated by ATP to form Pro-AMP and then transferred to the acceptor end of tRNA(Pro). The protein is Proline--tRNA ligase of Roseiflexus sp. (strain RS-1).